Consider the following 428-residue polypeptide: U2 small nuclear ribonucleoprotein auxiliary factor 35 kDa subunit-related protein 2-like (428 aa).

A disordered region spans residues 1 to 51; sequence MASRQTAIPEKLSRKQYKAAMKKEKRKKRRQKMARLRALEAPPEEDDDVSA. A compositionally biased stretch (basic residues) spans 23 to 35; the sequence is KEKRKKRRQKMAR. Over residues 42-51 the composition is skewed to acidic residues; sequence PPEEDDDVSA. Residue serine 50 is modified to Phosphoserine. A C3H1-type 1 zinc finger spans residues 157 to 185; that stretch reads EKYRPSCPFYNKTGACRFGNRCSRKHDFP. An RRM domain is found at 189-295; sequence PTLLVKSMFT…RQLQCEFCPV (107 aa). A C3H1-type 2 zinc finger spans residues 297–324; it reads RWKVAICGLFEMQKCPKGKHCNFLHVFR. The disordered stretch occupies residues 339–428; sequence MSPPAWTGSS…PGPQSQSHRT (90 aa). Position 340 is a phosphoserine (serine 340). Basic and acidic residues predominate over residues 351 to 366; the sequence is NSDRRERKDHHEEYYS. Low complexity predominate over residues 367 to 377; the sequence is KSRSYHSGSYH. Serine 375 is subject to Phosphoserine. Positions 389-410 are enriched in basic residues; that stretch reads SPHRWKKSHKQTTKSHERHSSR. Residues 419 to 428 show a composition bias toward polar residues; it reads PGPQSQSHRT.

Interacts with SF3B1. Interacts with ZCRB1. As to expression, highest expression levels are detected in the brain, and lower expression levels in other tissues like epididymis, testis, bone marrow or muscle. In testis, expressed in both Sertoli and spermatogenic cell.

It localises to the nucleus. Its function is as follows. Plays a role in splicing of the U12-type introns. Implicated also in removal of U2 introns positioned adjacent to a U12 intron. This Mus musculus (Mouse) protein is U2 small nuclear ribonucleoprotein auxiliary factor 35 kDa subunit-related protein 2-like.